The sequence spans 365 residues: Eukaryotic translation initiation factor 3 subunit H (365 aa).

The MPN domain maps to 11–160 (VKVEALVVMK…LRAFRLSPKF (150 aa)).

Belongs to the eIF-3 subunit H family. As to quaternary structure, component of the eukaryotic translation initiation factor 3 (eIF-3) complex.

The protein resides in the cytoplasm. Its function is as follows. Component of the eukaryotic translation initiation factor 3 (eIF-3) complex, which is involved in protein synthesis of a specialized repertoire of mRNAs and, together with other initiation factors, stimulates binding of mRNA and methionyl-tRNAi to the 40S ribosome. The eIF-3 complex specifically targets and initiates translation of a subset of mRNAs involved in cell proliferation. The polypeptide is Eukaryotic translation initiation factor 3 subunit H (Aspergillus terreus (strain NIH 2624 / FGSC A1156)).